Reading from the N-terminus, the 365-residue chain is tRNA/tmRNA (uracil-C(5))-methyltransferase (365 aa).

Residues Gln-189, Tyr-217, Asn-222, Glu-238, and Asp-298 each contribute to the S-adenosyl-L-methionine site. Cys-323 functions as the Nucleophile in the catalytic mechanism. Glu-357 acts as the Proton acceptor in catalysis.

The protein belongs to the class I-like SAM-binding methyltransferase superfamily. RNA M5U methyltransferase family. TrmA subfamily.

It carries out the reaction uridine(54) in tRNA + S-adenosyl-L-methionine = 5-methyluridine(54) in tRNA + S-adenosyl-L-homocysteine + H(+). It catalyses the reaction uridine(341) in tmRNA + S-adenosyl-L-methionine = 5-methyluridine(341) in tmRNA + S-adenosyl-L-homocysteine + H(+). In terms of biological role, dual-specificity methyltransferase that catalyzes the formation of 5-methyluridine at position 54 (m5U54) in all tRNAs, and that of position 341 (m5U341) in tmRNA (transfer-mRNA). The protein is tRNA/tmRNA (uracil-C(5))-methyltransferase of Pasteurella multocida (strain Pm70).